Reading from the N-terminus, the 757-residue chain is Polyribonucleotide nucleotidyltransferase (757 aa).

Mg(2+) contacts are provided by Asp-488 and Asp-494. Residues 555 to 614 form the KH domain; it reads PKLYTMKINAEKIRDVIGKGGAVIRALTEETGCQINIEEDGTITIAATDAAKADIAKRRI. The 69-residue stretch at 624-692 folds into the S1 motif domain; that stretch reads GKIYEGPVTK…ERGRVKLSMK (69 aa). Residues 693–757 are disordered; sequence VLAERPAPGS…ADTGSGQRVG (65 aa). The segment covering 720 to 736 has biased composition (basic and acidic residues); it reads ALAEREPRREMRDHGHP. Residues 737-747 are compositionally biased toward low complexity; sequence PSEQQQQQSPP.

This sequence belongs to the polyribonucleotide nucleotidyltransferase family. The cofactor is Mg(2+).

It localises to the cytoplasm. The catalysed reaction is RNA(n+1) + phosphate = RNA(n) + a ribonucleoside 5'-diphosphate. Its function is as follows. Involved in mRNA degradation. Catalyzes the phosphorolysis of single-stranded polyribonucleotides processively in the 3'- to 5'-direction. This Verminephrobacter eiseniae (strain EF01-2) protein is Polyribonucleotide nucleotidyltransferase.